The chain runs to 224 residues: Mammalian ependymin-related protein 1 (224 aa).

An N-terminal signal peptide occupies residues 1 to 37 (MPGRAPLHTVPGALGPWLLGCLWAWTLCGLCSLGAVG). Intrachain disulfides connect Cys42–Cys172, Cys88–Cys222, and Cys113–Cys210. Residues Asn130 and Asn182 are each glycosylated (N-linked (GlcNAc...) asparagine).

Belongs to the ependymin family. Homodimer. N-glycosylated; the glycan contains mannose-6-phosphate moieties.

It localises to the lysosome lumen. Its subcellular location is the secreted. Binds anionic lipids and gangliosides at acidic pH. This chain is Mammalian ependymin-related protein 1 (EPDR1), found in Macaca fascicularis (Crab-eating macaque).